Consider the following 356-residue polypeptide: MEQAAGEPTRTCLTEDIPKAKRCTVIGGCGFLGQHMVEQLLARGYAVNVFDIRQGFDNPRVQFFLGDLCSQQDLYPALKGVSTVFHCASPPPFNNNKELFYRVNYIGTKNVIETCKEAGVQKLILTSSASVIFEGVDIKNGTEDLPYATKPIDYYTETKILQERAVLGAHDPEKNFLTTAIRPHGIFGPRDPQLVPILIEAAKKGKMKFMIGNGKNLVDFTFVENVVHGHILAAEHLSQDTALGGKAFHITNDEPIPFWTFLSRILTGLNYEAPKYHIPYWLAYYLALLVSLLVMVISPVIQLQPTFTPMRVALAGTFHYYSCEKAKKLMGYRPLVTMDDAVDKTVRSFHHLRKVM.

Methionine 1 bears the N-acetylmethionine mark. Tyrosine 155 functions as the Proton acceptor in the catalytic mechanism. Residue lysine 159 participates in NAD(+) binding. The helical transmembrane segment at 281–301 (WLAYYLALLVSLLVMVISPVI) threads the bilayer. A Prevents secretion from ER motif is present at residues 353–356 (RKVM).

This sequence belongs to the 3-beta-HSD family. In terms of assembly, homodimer.

It localises to the endoplasmic reticulum membrane. Its subcellular location is the lipid droplet. The enzyme catalyses a 3beta-hydroxysteroid-4alpha-carboxylate + NADP(+) = a 3-oxosteroid + CO2 + NADPH. The catalysed reaction is a 3beta-hydroxysteroid-4alpha-carboxylate + NAD(+) = a 3-oxosteroid + CO2 + NADH. It carries out the reaction 4alpha-carboxyzymosterol + NADP(+) = zymosterone + CO2 + NADPH. It catalyses the reaction 4alpha-carboxy-4beta-methyl-5alpha-cholest-8-en-3beta-ol + NADP(+) = 4alpha-methyl-5alpha-cholest-8-en-3-one + CO2 + NADPH. The enzyme catalyses 4alpha-carboxy-5alpha-cholest-8-ene-3beta-ol + NADP(+) = 5alpha-cholest-8-en-3-one + CO2 + NADPH. The catalysed reaction is 4beta-methylzymosterol-4alpha-carboxylate + NADP(+) = 3-dehydro-4-methylzymosterol + CO2 + NADPH. It carries out the reaction 4beta-methylzymosterol-4alpha-carboxylate + NAD(+) = 3-dehydro-4-methylzymosterol + CO2 + NADH. It catalyses the reaction 4alpha-carboxy-5alpha-cholest-8-ene-3beta-ol + NAD(+) = 5alpha-cholest-8-en-3-one + CO2 + NADH. The enzyme catalyses 4alpha-carboxy-4beta-methyl-5alpha-cholest-8-en-3beta-ol + NAD(+) = 4alpha-methyl-5alpha-cholest-8-en-3-one + CO2 + NADH. The catalysed reaction is 4alpha-carboxyzymosterol + NAD(+) = zymosterone + CO2 + NADH. Its pathway is steroid biosynthesis; zymosterol biosynthesis; zymosterol from lanosterol: step 4/6. Functionally, catalyzes the NAD(P)(+)-dependent oxidative decarboxylation of the C4 methyl groups of 4-alpha-carboxysterols in post-squalene cholesterol biosynthesis. Also plays a role in the regulation of the endocytic trafficking of EGFR. The chain is Sterol-4-alpha-carboxylate 3-dehydrogenase, decarboxylating (NSDHL) from Bos taurus (Bovine).